A 354-amino-acid chain; its full sequence is Clavesin-1 (354 aa).

In terms of domain architecture, CRAL-TRIO spans 118–279 (IKRALIDGFP…EFGGTLPPYD (162 aa)). A disordered region spans residues 317–354 (RECSPKPMKRSQSVVEAGTLKHEEKGENENTQPLLALD). Basic and acidic residues predominate over residues 335-344 (TLKHEEKGEN). Polar residues predominate over residues 345–354 (ENTQPLLALD).

As to quaternary structure, forms a complex with clathrin heavy chain and gamma-adaptin. As to expression, expressed in brain with no expression detected in non-neuronal tissues (at protein level).

Its subcellular location is the golgi apparatus. The protein localises to the trans-Golgi network membrane. It is found in the early endosome membrane. It localises to the cytoplasmic vesicle. The protein resides in the clathrin-coated vesicle. Functionally, required for normal morphology of late endosomes and/or lysosomes in neurons. Binds phosphatidylinositol 3,5-bisphosphate (PtdIns(3,5)P2). The protein is Clavesin-1 of Rattus norvegicus (Rat).